We begin with the raw amino-acid sequence, 436 residues long: MNDSIKACLAAACLALPLLAQGAETLTIATVNNNDMIRMQRLSKVFEESHPDIALKWVVLEENVLRQRLTTDIATQGGQFDLLTIGMYEAALWGAKGWLEPMSGLPADYALDDLLPSVRDGLSVKGTLYALPFYAEASITYYRKDLFQQAGLRMPEQPTWTQLGEFAARLNRPDQGQYGICLRGKAGWGENMALIGTLANAFGARWFDERWQPEFSGGEWKKALDFYVSTLKRYGPPGASSNGFNENLALFNSGKCAIWVDASVAGSFVTDKSQSKVADATGFAFAPREVTDKGASWLYSWALAIPASSRAKDAAKAFATWATSQAYGKLVADREGVANVPPGTRASTYSEAYLAAAPFARVTLESLKRVDPNHPTLKPVPYVGIQLVTIPEFQAIGTQVGKLFSAALTGQMSSDQALAAAQQSTAREMKRAGYPK.

A signal peptide spans 1-22 (MNDSIKACLAAACLALPLLAQG).

Belongs to the bacterial solute-binding protein 1 family.

The protein resides in the periplasm. Binds mannitol with high affinity. This is Mannitol-binding protein from Pseudomonas aeruginosa (strain ATCC 15692 / DSM 22644 / CIP 104116 / JCM 14847 / LMG 12228 / 1C / PRS 101 / PAO1).